The sequence spans 93 residues: Small ribosomal subunit protein uS19m (93 aa).

This sequence belongs to the universal ribosomal protein uS19 family. As to quaternary structure, component of the mitochondrial small ribosomal subunit (mt-SSU). Mature yeast 74S mitochondrial ribosomes consist of a small (37S) and a large (54S) subunit. The 37S small subunit contains a 15S ribosomal RNA (15S mt-rRNA) and at least 32 different proteins. The 54S large subunit contains a 21S rRNA (21S mt-rRNA) and at least 45 different proteins.

The protein resides in the mitochondrion. Component of the mitochondrial ribosome (mitoribosome), a dedicated translation machinery responsible for the synthesis of mitochondrial genome-encoded proteins, including at least some of the essential transmembrane subunits of the mitochondrial respiratory chain. The mitoribosomes are attached to the mitochondrial inner membrane and translation products are cotranslationally integrated into the membrane. The protein is Small ribosomal subunit protein uS19m (rsm19) of Schizosaccharomyces pombe (strain 972 / ATCC 24843) (Fission yeast).